A 55-amino-acid polypeptide reads, in one-letter code: Male-specific sperm protein Mst84Dc (55 aa).

It belongs to the MST(3)CGP family. Testis.

The sequence is that of Male-specific sperm protein Mst84Dc (Mst84Dc) from Drosophila melanogaster (Fruit fly).